The chain runs to 231 residues: Vacuolar protein sorting-associated protein 24 (231 aa).

Positions 184 to 195 (KAADAATHREQS) are enriched in basic and acidic residues. The disordered stretch occupies residues 184–214 (KAADAATHREQSLKQALPSLSNGIAKDSTEI).

Belongs to the SNF7 family. As to quaternary structure, component of the endosomal sorting required for transport complex III (ESCRT-III).

The protein resides in the endosome membrane. It is found in the endomembrane system. Functionally, class E VPS protein implicated in concentration and sorting of cargo proteins of the multivesicular body (MVB) for incorporation into intralumenal vesicles. The lumenal sequestrated membrane proteins will be targeted into the vacuole after fusion of the endosome with the vacuole. The chain is Vacuolar protein sorting-associated protein 24 (vps24) from Schizosaccharomyces pombe (strain 972 / ATCC 24843) (Fission yeast).